The sequence spans 518 residues: Homoserine O-acetyltransferase (518 aa).

In terms of domain architecture, AB hydrolase-1 spans 69 to 468 (NVMVICHALT…DSPEGHDAFL (400 aa)). S182 is an active-site residue. S182 functions as the Nucleophile in the catalytic mechanism. The tract at residues 267–365 (RFGRNIPDPS…PNSVSDPFRP (99 aa)) is disordered. A compositionally biased stretch (basic and acidic residues) spans 290 to 303 (PAEEHYDIHNEGFR). The segment covering 310–341 (RSSTTTSDAPPSPTRTSSTSSTDAITPASTTP) has biased composition (low complexity). Active-site residues include D435 and H464.

It belongs to the AB hydrolase superfamily. MetX family.

The catalysed reaction is L-homoserine + acetyl-CoA = O-acetyl-L-homoserine + CoA. It functions in the pathway amino-acid biosynthesis; L-methionine biosynthesis via de novo pathway; O-acetyl-L-homoserine from L-homoserine: step 1/1. Functionally, commits homoserine to the methionine biosynthesis pathway by catalyzing its O-acetylation. The sequence is that of Homoserine O-acetyltransferase (MET2) from Ascobolus immersus.